A 527-amino-acid chain; its full sequence is T-complex protein 1 subunit delta (527 aa).

It belongs to the TCP-1 chaperonin family. As to quaternary structure, heterooligomeric complex of about 850 to 900 kDa that forms two stacked rings, 12 to 16 nm in diameter.

The protein localises to the cytoplasm. Functionally, molecular chaperone; assists the folding of proteins upon ATP hydrolysis. Known to play a role, in vitro, in the folding of actin and tubulin. This is T-complex protein 1 subunit delta (CCT4) from Yarrowia lipolytica (strain CLIB 122 / E 150) (Yeast).